A 1481-amino-acid chain; its full sequence is Structural protein ORF147 (1481 aa).

Disordered regions lie at residues 65–88 and 1319–1403; these read AEKR…ENLE and DEKL…PPIP. Low complexity-rich tracts occupy residues 73–84, 1323–1336, and 1393–1403; these read KGSQKKSNSSSS, SSTV…SPKT, and SSRTTITPPIP.

The protein resides in the virion. The protein is Structural protein ORF147 of Noctuidae (owlet moths).